The primary structure comprises 428 residues: Enolase (428 aa).

(2R)-2-phosphoglycerate is bound at residue Gln-163. The active-site Proton donor is Glu-205. Positions 242, 285, and 312 each coordinate Mg(2+). Lys-337, Arg-366, Ser-367, and Lys-388 together coordinate (2R)-2-phosphoglycerate. The active-site Proton acceptor is Lys-337.

It belongs to the enolase family. Requires Mg(2+) as cofactor.

Its subcellular location is the cytoplasm. It localises to the secreted. It is found in the cell surface. It catalyses the reaction (2R)-2-phosphoglycerate = phosphoenolpyruvate + H2O. It participates in carbohydrate degradation; glycolysis; pyruvate from D-glyceraldehyde 3-phosphate: step 4/5. In terms of biological role, catalyzes the reversible conversion of 2-phosphoglycerate (2-PG) into phosphoenolpyruvate (PEP). It is essential for the degradation of carbohydrates via glycolysis. In Erythrobacter litoralis (strain HTCC2594), this protein is Enolase.